A 727-amino-acid chain; its full sequence is Prolyl endopeptidase-like (727 aa).

Active-site charge relay system residues include Ser559, Asp645, and His690.

It belongs to the peptidase S9A family. Homodimer. Interacts with the AP-1 complex.

Its subcellular location is the cytoplasm. The protein localises to the cytosol. It localises to the golgi apparatus. The protein resides in the trans-Golgi network. It is found in the cytoskeleton. Its subcellular location is the nucleus. Functionally, serine peptidase whose precise substrate specificity remains unclear. Does not cleave peptides after a arginine or lysine residue. Regulates trans-Golgi network morphology and sorting by regulating the membrane binding of the AP-1 complex. May play a role in the regulation of synaptic vesicle exocytosis. This Pongo abelii (Sumatran orangutan) protein is Prolyl endopeptidase-like (PREPL).